Consider the following 199-residue polypeptide: Translation machinery-associated protein 22 (199 aa).

The region spanning 97-168 is the SUI1 domain; sequence VVIRREARTK…EVEAYIHALL (72 aa).

This sequence belongs to the DENR family. In terms of assembly, interacts with the 40S ribosomal subunit.

The protein resides in the cytoplasm. The sequence is that of Translation machinery-associated protein 22 (TMA22) from Eremothecium gossypii (strain ATCC 10895 / CBS 109.51 / FGSC 9923 / NRRL Y-1056) (Yeast).